A 333-amino-acid polypeptide reads, in one-letter code: Phenylalanine--tRNA ligase alpha subunit (333 aa).

Residue glutamate 258 coordinates Mg(2+).

It belongs to the class-II aminoacyl-tRNA synthetase family. Phe-tRNA synthetase alpha subunit type 1 subfamily. In terms of assembly, tetramer of two alpha and two beta subunits. Mg(2+) serves as cofactor.

It localises to the cytoplasm. It carries out the reaction tRNA(Phe) + L-phenylalanine + ATP = L-phenylalanyl-tRNA(Phe) + AMP + diphosphate + H(+). This Wigglesworthia glossinidia brevipalpis protein is Phenylalanine--tRNA ligase alpha subunit.